The following is a 462-amino-acid chain: Succinate semialdehyde dehydrogenase [NAD(P)+] Sad (462 aa).

NADP(+) is bound by residues Trp-136–Asn-137, Lys-160–Pro-163, and Gly-212–Ser-213. Glu-234 acts as the Proton acceptor in catalysis. Residue Leu-235 coordinates NADP(+). The Nucleophile role is filled by Cys-268. An NADP(+)-binding site is contributed by Glu-365.

The protein belongs to the aldehyde dehydrogenase family. In terms of assembly, homodimer.

The catalysed reaction is succinate semialdehyde + NAD(+) + H2O = succinate + NADH + 2 H(+). It carries out the reaction succinate semialdehyde + NADP(+) + H2O = succinate + NADPH + 2 H(+). It functions in the pathway amino-acid degradation; 4-aminobutanoate degradation. Its function is as follows. Catalyzes the NAD(+)-dependent oxidation of succinate semialdehyde to succinate. It acts preferentially with NAD as cosubstrate but can also use NADP. Prevents the toxic accumulation of succinate semialdehyde (SSA) and plays an important role when arginine and putrescine are used as the sole nitrogen or carbon sources. The chain is Succinate semialdehyde dehydrogenase [NAD(P)+] Sad (sad) from Escherichia coli (strain K12).